We begin with the raw amino-acid sequence, 652 residues long: Acetyl-coenzyme A synthetase (652 aa).

Residues 191 to 194 (RAGR), Thr311, and Asn335 contribute to the CoA site. Residues 387–389 (GEP), 411–416 (DTWWQT), Asp500, and Arg515 each bind ATP. Ser523 serves as a coordination point for CoA. An ATP-binding site is contributed by Arg526. Residues Val537, His539, and Ile542 each coordinate Mg(2+). Arg584 provides a ligand contact to CoA. Residue Lys609 is modified to N6-acetyllysine.

Belongs to the ATP-dependent AMP-binding enzyme family. It depends on Mg(2+) as a cofactor. In terms of processing, acetylated. Deacetylation by the SIR2-homolog deacetylase activates the enzyme.

The catalysed reaction is acetate + ATP + CoA = acetyl-CoA + AMP + diphosphate. Functionally, catalyzes the conversion of acetate into acetyl-CoA (AcCoA), an essential intermediate at the junction of anabolic and catabolic pathways. Acs undergoes a two-step reaction. In the first half reaction, Acs combines acetate with ATP to form acetyl-adenylate (AcAMP) intermediate. In the second half reaction, it can then transfer the acetyl group from AcAMP to the sulfhydryl group of CoA, forming the product AcCoA. Its function is as follows. Enables the cell to use acetate during aerobic growth to generate energy via the TCA cycle, and biosynthetic compounds via the glyoxylate shunt. Acetylates CheY, the response regulator involved in flagellar movement and chemotaxis. The protein is Acetyl-coenzyme A synthetase of Salmonella typhi.